A 504-amino-acid polypeptide reads, in one-letter code: Maturase K (504 aa).

It belongs to the intron maturase 2 family. MatK subfamily.

The protein localises to the plastid. It localises to the chloroplast. Usually encoded in the trnK tRNA gene intron. Probably assists in splicing its own and other chloroplast group II introns. The sequence is that of Maturase K from Vigna mungo (Black gram).